Consider the following 330-residue polypeptide: Aspartate--ammonia ligase (330 aa).

The protein belongs to the class-II aminoacyl-tRNA synthetase family. AsnA subfamily.

It localises to the cytoplasm. It catalyses the reaction L-aspartate + NH4(+) + ATP = L-asparagine + AMP + diphosphate + H(+). Its pathway is amino-acid biosynthesis; L-asparagine biosynthesis; L-asparagine from L-aspartate (ammonia route): step 1/1. This Streptococcus thermophilus (strain ATCC BAA-250 / LMG 18311) protein is Aspartate--ammonia ligase.